Here is a 431-residue protein sequence, read N- to C-terminus: Enolase (431 aa).

Residue glutamine 167 coordinates (2R)-2-phosphoglycerate. Residue glutamate 209 is the Proton donor of the active site. The Mg(2+) site is built by aspartate 246, glutamate 289, and aspartate 316. (2R)-2-phosphoglycerate-binding residues include lysine 341, arginine 370, serine 371, and lysine 392. Lysine 341 functions as the Proton acceptor in the catalytic mechanism.

The protein belongs to the enolase family. In terms of assembly, component of the RNA degradosome, a multiprotein complex involved in RNA processing and mRNA degradation. Mg(2+) serves as cofactor.

It is found in the cytoplasm. The protein localises to the secreted. It localises to the cell surface. The enzyme catalyses (2R)-2-phosphoglycerate = phosphoenolpyruvate + H2O. The protein operates within carbohydrate degradation; glycolysis; pyruvate from D-glyceraldehyde 3-phosphate: step 4/5. Functionally, catalyzes the reversible conversion of 2-phosphoglycerate (2-PG) into phosphoenolpyruvate (PEP). It is essential for the degradation of carbohydrates via glycolysis. In Hahella chejuensis (strain KCTC 2396), this protein is Enolase.